The chain runs to 187 residues: UPF0232 protein MMAR_0004 (187 aa).

Disordered stretches follow at residues 1-77 (MSDD…QPLG) and 166-187 (ASPS…DTYG). Basic and acidic residues predominate over residues 14–30 (AARDELSGMDLVRRTLA). Low complexity predominate over residues 31-55 (EARAAARARGQDPGRGFAAGPAPRR).

Belongs to the UPF0232 family.

This chain is UPF0232 protein MMAR_0004, found in Mycobacterium marinum (strain ATCC BAA-535 / M).